The chain runs to 87 residues: MRIKGVVLSYRRSKENQHTNVMIIKPLDINSREEASKLIGRLVVWKSPSGKVLKGKIVRVHGTRGAVRARFEKGLPGQALGDYVEII.

The protein belongs to the eukaryotic ribosomal protein eL33 family.

The sequence is that of Large ribosomal subunit protein eL33 from Pyrococcus horikoshii (strain ATCC 700860 / DSM 12428 / JCM 9974 / NBRC 100139 / OT-3).